Here is a 395-residue protein sequence, read N- to C-terminus: Capsid protein (395 aa).

The segment covering 1–41 has biased composition (basic residues); it reads MARKYAKRSKSRPRTARRSPKSRSRPRSRAPRRKAPSRPRI. The disordered stretch occupies residues 1 to 51; sequence MARKYAKRSKSRPRTARRSPKSRSRPRSRAPRRKAPSRPRIQRVNPVRRPM. The Nuclear localization signal signature appears at 2–9; that stretch reads ARKYAKRS.

Its subcellular location is the host nucleus. It is found in the virion. Its function is as follows. Self-assembles to form the virion icosahedral capsid. The sequence is that of Capsid protein from Chaetoceros setoense (Chaetoceros setoense DNA virus).